The primary structure comprises 243 residues: Variant surface antigen E (243 aa).

A signal peptide spans 1–29 (MKKSIFSKKLLVSFGSLVTLAAIPLIAIS). Cys-30 is lipidated: N-palmitoyl cysteine. The S-diacylglycerol cysteine moiety is linked to residue Cys-30. A disordered region spans residues 34–243 (TDNLSQSQQP…TTSDGQNQNK (210 aa)). Residues 52-92 (GTNTENGSNNGSGSGTTNSSGGTNQSGSASGNGSSNSSVST) show a composition bias toward low complexity. Residues 93–243 (PDGQHSNPSN…TTSDGQNQNK (151 aa)) are compositionally biased toward polar residues. 11 tandem repeats follow at residues 97–109 (HSNP…SDPK), 110–122 (ESNP…SDPK), 123–135 (ESNP…SDGQ), 136–148 (HSNP…SDPK), 149–161 (ESNP…SDGQ), 162–174 (HSNP…SDGQ), 175–187 (HSNP…SDGQ), 188–200 (HSNP…SDGQ), 201–213 (HSNP…SDGQ), 214–226 (HSNP…SDGQ), and 227–239 (HSNP…SDGQ). The tract at residues 97-239 (HSNPSNPTTS…PSNPTTSDGQ (143 aa)) is 11 X 13 AA tandem repeats.

The protein resides in the cell membrane. Its function is as follows. Responsible for the antigenic diversity for host adaptation. Expression in E.coli of a construct containing vlpD, vlpE, and vlpF yields antigenically distinguishable products corresponding to each gene. This Mesomycoplasma hyorhinis (Mycoplasma hyorhinis) protein is Variant surface antigen E (vlpE).